The sequence spans 219 residues: EP300-interacting inhibitor of differentiation 2 (219 aa).

A disordered region spans residues 1–71; the sequence is MSELPADQGV…PVPEAREGPM (71 aa). Residues 20–34 show a composition bias toward basic and acidic residues; the sequence is GDVRQAEVGGRRREP. At R75 the chain carries Omega-N-methylarginine. The disordered stretch occupies residues 95–115; sequence AEPAEEEGPEGRPRSRPGNGP.

Heterodimer with EID2B. Interacts with the C-terminus of EP300. Interacts with HDAC1 and HDAC2. Interacts with SMAD2, SMAD4 and with the MH2 domain of SMAD3.

The protein resides in the nucleus. Its function is as follows. Interacts with EP300 and acts as a repressor of MYOD-dependent transcription and muscle differentiation. Inhibits EP300 histone acetyltransferase activity. Acts as a repressor of TGFB/SMAD transcriptional responses. May act as a repressor of the TGFB/SMAD3-dependent signaling by selectively blocking formation of TGFB-induced SMAD3-SMAD4 complex. This is EP300-interacting inhibitor of differentiation 2 from Bos taurus (Bovine).